Reading from the N-terminus, the 156-residue chain is Endoribonuclease YbeY (156 aa).

Residues His117, His121, and His127 each contribute to the Zn(2+) site.

This sequence belongs to the endoribonuclease YbeY family. The cofactor is Zn(2+).

The protein localises to the cytoplasm. Its function is as follows. Single strand-specific metallo-endoribonuclease involved in late-stage 70S ribosome quality control and in maturation of the 3' terminus of the 16S rRNA. This chain is Endoribonuclease YbeY, found in Shewanella frigidimarina (strain NCIMB 400).